A 489-amino-acid polypeptide reads, in one-letter code: MSVYGLQRLYIAGAHADATSGKTFDTFDPATGELLARVQQASADDVDRAVASAREGQREWAAMTAMQRSRILRRAVELLRERNDALAELEMRDTGKPIAETRAVDIVTGADVIEYYAGLATAIEGLQVPLRPESFVYTRREPLGVCAGIGAWNYPIQIACWKSAPALAAGNAMIFKPSEVTPLSALKLAEIYTEAGVPAGVFNVVQGDGSVGALLSAHPGIAKVSFTGGVETGKKVMSLAGASSLKEVTMELGGKSPLIVFDDADLDRAADIAVTANFFSAGQVCTNGTRVFVQQAVKDAFVERVLARVARIRAGKPSDPDTNFGPLASAAQLDKVLGYIDSGKAEGAKLLAGGARLVNDHFASGQYVAPTVFGDCRDDMRIVREEIFGPVMSILSFETEDEAIARANATDYGLAAGVVTENLSRAHRAIHRLEAGICWINTWGESPAEMPVGGYKQSGVGRENGITTLEHYTRIKSVQVELGRYQPVF.

K(+) contacts are provided by T26 and D93. Position 150–152 (150–152 (GAW)) interacts with NAD(+). K162 acts as the Charge relay system in catalysis. 176 to 179 (KPSE) provides a ligand contact to NAD(+). V180 provides a ligand contact to K(+). 229–232 (GVET) provides a ligand contact to NAD(+). Residue L245 participates in K(+) binding. E251 (proton acceptor) is an active-site residue. NAD(+) is bound by residues G253, C285, and E386. The Nucleophile role is filled by C285. A Cysteine sulfenic acid (-SOH) modification is found at C285. K456 and G459 together coordinate K(+). The active-site Charge relay system is the E463.

The protein belongs to the aldehyde dehydrogenase family. In terms of assembly, dimer of dimers. It depends on K(+) as a cofactor.

The enzyme catalyses betaine aldehyde + NAD(+) + H2O = glycine betaine + NADH + 2 H(+). Its pathway is amine and polyamine biosynthesis; betaine biosynthesis via choline pathway; betaine from betaine aldehyde: step 1/1. In terms of biological role, involved in the biosynthesis of the osmoprotectant glycine betaine. Catalyzes the irreversible oxidation of betaine aldehyde to the corresponding acid. The sequence is that of Betaine aldehyde dehydrogenase from Burkholderia mallei (strain SAVP1).